Consider the following 447-residue polypeptide: UDP-glycosyltransferase 79B9 (447 aa).

Residues S260, 319–321 (VQQ), 336–344 (HCGFGSMWE), and 358–361 (LCDQ) contribute to the UDP-alpha-D-glucose site.

The protein belongs to the UDP-glycosyltransferase family.

The protein is UDP-glycosyltransferase 79B9 (UGT79B9) of Arabidopsis thaliana (Mouse-ear cress).